The primary structure comprises 117 residues: Toxin CSTX-12 (117 aa).

The first 20 residues, 1–20, serve as a signal peptide directing secretion; it reads MKVLVICAVLFLTIFSNSSA. The propeptide occupies 21–47; it reads ETEDDFLEDESFEADDVIPFLAREQVR. 4 disulfide bridges follow: Cys-50–Cys-65, Cys-57–Cys-74, Cys-64–Cys-95, and Cys-76–Cys-93. Positions 82-87 are excised as a propeptide; sequence RSDTAR. Ala-116 is modified (alanine amide).

Belongs to the neurotoxin 19 (CSTX) family. 12 subfamily. Heterodimer of A and B chains; disulfide-linked. Interacts with CSTX-1 (AC P81694), and with CSTX-9 (AC P58604). As to expression, expressed by the venom gland.

It is found in the secreted. The protein resides in the target cell membrane. Synergistic toxin that induces or increases a cytolytic effect when combined with CSTX-1 (AC P81694) or CSTX-9 (AC P58604). When alone, has a weak insecticidal activity, with an unknown molecular target. The protein is Toxin CSTX-12 of Cupiennius salei (American wandering spider).